The following is a 528-amino-acid chain: MSKQILYQDDARKALEKGMDILTEAVSVTLGPKGRNVVLEKKFGAPQIVNDGVTIAKEISLEDHIENTGVALIRQAASKTNDVAGDGTTTATVLASAIVKQGMRNVAAGSNPMAIKKGIEKATNFVVSKIAEYAKPVEDTTAIVQVASISSGNDAEVGKMIADAIDRVGREGVISLEEGKSTSTSLEITEGMQFEKGFISPYFVTDLDRMEVLQENPFILFTDKKITLVQQELVPLLEQIAKTSKPLLIIAEDIEKEALATIVVNKLRGILNVVAVRAPGFGDRRKSLLEDMSILTGGQVITEDAGFSLDTVQLDMLGKARRVVVTKDSTTIIADGHEATVKSRCEQIKRQIETSDSLYEREKLQERLAKLSGGVAVIKVGAATETEMKDKKLRLEDAINATKAAIEEGIVPGGGSTNVHISGELFVWAKNNLFEDELIGALIVQRALTYPLRRIAFNAGDNGAVVVEKVKTNDFCIGYDASNGKIVNMYDAGIIDPAKVARSALQNATSIAAMVLTTECIVVDKLEA.

Residues 29-32, 86-90, Gly-414, and Asp-496 contribute to the ATP site; these read TLGP and DGTTT.

It belongs to the chaperonin (HSP60) family. Forms a cylinder of 14 subunits composed of two heptameric rings stacked back-to-back. Interacts with the co-chaperonin GroES.

The protein resides in the plastid. It is found in the chloroplast. The enzyme catalyses ATP + H2O + a folded polypeptide = ADP + phosphate + an unfolded polypeptide.. Its function is as follows. Together with its co-chaperonin GroES, plays an essential role in assisting protein folding. The GroEL-GroES system forms a nano-cage that allows encapsulation of the non-native substrate proteins and provides a physical environment optimized to promote and accelerate protein folding. This is Chaperonin GroEL, chloroplastic from Porphyra purpurea (Red seaweed).